Reading from the N-terminus, the 126-residue chain is Large ribosomal subunit protein bL20c (126 aa).

It belongs to the bacterial ribosomal protein bL20 family.

The protein resides in the plastid. It localises to the chloroplast. Functionally, binds directly to 23S ribosomal RNA and is necessary for the in vitro assembly process of the 50S ribosomal subunit. It is not involved in the protein synthesizing functions of that subunit. In Lactuca sativa (Garden lettuce), this protein is Large ribosomal subunit protein bL20c.